Consider the following 715-residue polypeptide: 1,4-alpha-glucan branching enzyme GlgB (715 aa).

Asp-396 functions as the Nucleophile in the catalytic mechanism. Glu-449 acts as the Proton donor in catalysis.

It belongs to the glycosyl hydrolase 13 family. GlgB subfamily. As to quaternary structure, monomer.

It carries out the reaction Transfers a segment of a (1-&gt;4)-alpha-D-glucan chain to a primary hydroxy group in a similar glucan chain.. The protein operates within glycan biosynthesis; glycogen biosynthesis. Its function is as follows. Catalyzes the formation of the alpha-1,6-glucosidic linkages in glycogen by scission of a 1,4-alpha-linked oligosaccharide from growing alpha-1,4-glucan chains and the subsequent attachment of the oligosaccharide to the alpha-1,6 position. This is 1,4-alpha-glucan branching enzyme GlgB from Vibrio vulnificus (strain CMCP6).